The sequence spans 142 residues: Large ribosomal subunit protein uL13 (142 aa).

Belongs to the universal ribosomal protein uL13 family. In terms of assembly, part of the 50S ribosomal subunit.

Functionally, this protein is one of the early assembly proteins of the 50S ribosomal subunit, although it is not seen to bind rRNA by itself. It is important during the early stages of 50S assembly. In Cellvibrio japonicus (strain Ueda107) (Pseudomonas fluorescens subsp. cellulosa), this protein is Large ribosomal subunit protein uL13.